A 177-amino-acid chain; its full sequence is Adenine phosphoribosyltransferase (177 aa).

Belongs to the purine/pyrimidine phosphoribosyltransferase family. Homodimer.

It is found in the cytoplasm. It carries out the reaction AMP + diphosphate = 5-phospho-alpha-D-ribose 1-diphosphate + adenine. Its pathway is purine metabolism; AMP biosynthesis via salvage pathway; AMP from adenine: step 1/1. Functionally, catalyzes a salvage reaction resulting in the formation of AMP, that is energically less costly than de novo synthesis. The sequence is that of Adenine phosphoribosyltransferase from Leptospira biflexa serovar Patoc (strain Patoc 1 / Ames).